A 548-amino-acid chain; its full sequence is Chaperonin GroEL (548 aa).

ATP is bound by residues 30-33, lysine 51, 87-91, glycine 415, 479-481, and aspartate 495; these read TLGP, DGTTT, and NAA. Residues 526–548 form a disordered region; it reads REDKSSDVASSPAGGMGGMGGMM. Residues 539-548 are compositionally biased toward gly residues; sequence GGMGGMGGMM.

It belongs to the chaperonin (HSP60) family. In terms of assembly, forms a cylinder of 14 subunits composed of two heptameric rings stacked back-to-back. Interacts with the co-chaperonin GroES.

It localises to the cytoplasm. It catalyses the reaction ATP + H2O + a folded polypeptide = ADP + phosphate + an unfolded polypeptide.. Functionally, together with its co-chaperonin GroES, plays an essential role in assisting protein folding. The GroEL-GroES system forms a nano-cage that allows encapsulation of the non-native substrate proteins and provides a physical environment optimized to promote and accelerate protein folding. This Buchnera aphidicola subsp. Schizaphis graminum (strain Sg) protein is Chaperonin GroEL.